Reading from the N-terminus, the 78-residue chain is Major outer membrane lipoprotein Lpp (78 aa).

Positions 1–19 (MKAKIVLGAVILASGLLAG) are cleaved as a signal peptide. A lipid anchor (N-palmitoyl cysteine) is attached at Cys20. Cys20 is lipidated: S-diacylglycerol cysteine. 2 consecutive repeats follow at residues 25–35 (NAQLDQISSDV) and 39–49 (NTQVQQLSSDV). The stretch at 28 to 62 (LDQISSDVNRLNTQVQQLSSDVQSANAQAKAAYEA) forms a coiled coil. Lys78 is modified (N6-murein peptidoglycan lysine).

The protein belongs to the Lpp family. In terms of assembly, homotrimer.

Its subcellular location is the cell outer membrane. The protein localises to the secreted. It is found in the cell wall. In terms of biological role, a highly abundant outer membrane lipoprotein that controls the distance between the inner and outer membranes. The only protein known to be covalently linked to the peptidoglycan network (PGN). Also non-covalently binds the PGN. The link between the cell outer membrane and PGN contributes to maintenance of the structural and functional integrity of the cell envelope, and maintains the correct distance between the PGN and the outer membrane. In Proteus mirabilis, this protein is Major outer membrane lipoprotein Lpp.